We begin with the raw amino-acid sequence, 120 residues long: MFSLPGYEYFLGFLIIAAAVPILALVTNLIVSPKGRTGERKLTYESGMEPIGGAWIQFNIRYYMFALVFVIFDVETVFLYPWAVAFNRLGLLAFIEALIFITILVIALAYAWRKGALEWS.

A run of 3 helical transmembrane segments spans residues 10–30 (FLGF…TNLI), 64–84 (MFAL…PWAV), and 89–109 (LGLL…IALA).

This sequence belongs to the complex I subunit 3 family. NDH-1 can be composed of about 15 different subunits; different subcomplexes with different compositions have been identified which probably have different functions.

The protein resides in the cellular thylakoid membrane. It catalyses the reaction a plastoquinone + NADH + (n+1) H(+)(in) = a plastoquinol + NAD(+) + n H(+)(out). It carries out the reaction a plastoquinone + NADPH + (n+1) H(+)(in) = a plastoquinol + NADP(+) + n H(+)(out). Functionally, NDH-1 shuttles electrons from an unknown electron donor, via FMN and iron-sulfur (Fe-S) centers, to quinones in the respiratory and/or the photosynthetic chain. The immediate electron acceptor for the enzyme in this species is believed to be plastoquinone. Couples the redox reaction to proton translocation, and thus conserves the redox energy in a proton gradient. Cyanobacterial NDH-1 also plays a role in inorganic carbon-concentration. This chain is NAD(P)H-quinone oxidoreductase subunit 3, found in Prochlorococcus marinus subsp. pastoris (strain CCMP1986 / NIES-2087 / MED4).